The primary structure comprises 84 residues: Large ribosomal subunit protein uL23 (84 aa).

This sequence belongs to the universal ribosomal protein uL23 family. Part of the 50S ribosomal subunit. Contacts protein L29.

In terms of biological role, binds to 23S rRNA. One of the proteins that surrounds the polypeptide exit tunnel on the outside of the ribosome. The polypeptide is Large ribosomal subunit protein uL23 (Halobacterium salinarum (strain ATCC 700922 / JCM 11081 / NRC-1) (Halobacterium halobium)).